Reading from the N-terminus, the 464-residue chain is MESGSMKTPLVNNQEEARSSSSITCGLLLSTSVAVTGSFVYGCAMSYSSPAQSKIMEELGLSVADYSFFTSVMTLGGMITAAFSGKIAAVIGRRQTMWIADVFCIFGWLAVAFAHDKMLLNIGRGFLGFGVGLISYVVPVYIAEITPKAFRGGFSFSNQLLQSFGISLMFFTGNFFHWRTLALLSAIPCGIQMICLFFIPESPRWLAMYGRERELEVTLKRLRGENGDILEEAAEIRETVETSRRESRSGLKDLFNMKNAHPLIIGLGLMLLQQFCGSSAISAYAARIFDTAGFPSDIGTSILAVILVPQSIIVMFAVDRCGRRPLLMSSSIGLCICSFLIGLSYYLQNHGDFQEFCSPILIVGLVGYVLSFGIGLGGLPWVIMSEVFPVNVKITAGSLVTVSNWFFSWIIIFSFNFMMQWSAFGTYFIFAGVSLMSFVFVWTLVPETKGRTLEDIQQSLGQLS.

Transmembrane regions (helical) follow at residues 23–43, 72–92, 95–115, 125–145, 156–176, 180–200, 263–283, 298–318, 326–346, 359–379, 399–419, and 424–444; these read ITCGLLLSTSVAVTGSFVYGC, VMTLGGMITAAFSGKIAAVIG, QTMWIADVFCIFGWLAVAFAH, GFLGFGVGLISYVVPVYIAEI, FSNQLLQSFGISLMFFTGNFF, TLALLSAIPCGIQMICLFFIP, LIIGLGLMLLQQFCGSSAISA, IGTSILAVILVPQSIIVMFAV, LLMSSSIGLCICSFLIGLSYY, PILIVGLVGYVLSFGIGLGGL, LVTVSNWFFSWIIIFSFNFMM, and FGTYFIFAGVSLMSFVFVWTL.

The protein belongs to the major facilitator superfamily. Sugar transporter (TC 2.A.1.1) family.

The protein localises to the membrane. Functionally, sugar transporter. The chain is Sugar transporter ERD6-like 1 (SUGTL4) from Arabidopsis thaliana (Mouse-ear cress).